The primary structure comprises 250 residues: Ribosomal RNA small subunit methyltransferase J (250 aa).

S-adenosyl-L-methionine-binding positions include 102–103, 118–119, 154–155, and Asp-172; these read RD, ER, and SS.

Belongs to the methyltransferase superfamily. RsmJ family.

The protein localises to the cytoplasm. It catalyses the reaction guanosine(1516) in 16S rRNA + S-adenosyl-L-methionine = N(2)-methylguanosine(1516) in 16S rRNA + S-adenosyl-L-homocysteine + H(+). Its function is as follows. Specifically methylates the guanosine in position 1516 of 16S rRNA. This chain is Ribosomal RNA small subunit methyltransferase J, found in Edwardsiella ictaluri (strain 93-146).